A 312-amino-acid polypeptide reads, in one-letter code: Aspartate carbamoyltransferase catalytic subunit (312 aa).

Arg-58 and Thr-59 together coordinate carbamoyl phosphate. Residue Lys-86 coordinates L-aspartate. Carbamoyl phosphate contacts are provided by Arg-108, His-136, and Gln-139. Residues Arg-169 and Arg-223 each contribute to the L-aspartate site. Residues Gly-264 and Pro-265 each coordinate carbamoyl phosphate.

This sequence belongs to the aspartate/ornithine carbamoyltransferase superfamily. ATCase family. In terms of assembly, heterododecamer (2C3:3R2) of six catalytic PyrB chains organized as two trimers (C3), and six regulatory PyrI chains organized as three dimers (R2).

The catalysed reaction is carbamoyl phosphate + L-aspartate = N-carbamoyl-L-aspartate + phosphate + H(+). The protein operates within pyrimidine metabolism; UMP biosynthesis via de novo pathway; (S)-dihydroorotate from bicarbonate: step 2/3. Functionally, catalyzes the condensation of carbamoyl phosphate and aspartate to form carbamoyl aspartate and inorganic phosphate, the committed step in the de novo pyrimidine nucleotide biosynthesis pathway. In Acetivibrio thermocellus (strain ATCC 27405 / DSM 1237 / JCM 9322 / NBRC 103400 / NCIMB 10682 / NRRL B-4536 / VPI 7372) (Clostridium thermocellum), this protein is Aspartate carbamoyltransferase catalytic subunit.